Reading from the N-terminus, the 387-residue chain is Succinate--CoA ligase [ADP-forming] subunit beta (387 aa).

ATP contacts are provided by residues lysine 46, 53-55 (GRG), glutamate 99, alanine 102, and glutamate 107. Residues asparagine 199 and aspartate 213 each coordinate Mg(2+). Residues asparagine 264 and 321-323 (GIV) contribute to the substrate site.

Belongs to the succinate/malate CoA ligase beta subunit family. As to quaternary structure, heterotetramer of two alpha and two beta subunits. Requires Mg(2+) as cofactor.

The catalysed reaction is succinate + ATP + CoA = succinyl-CoA + ADP + phosphate. It carries out the reaction GTP + succinate + CoA = succinyl-CoA + GDP + phosphate. Its pathway is carbohydrate metabolism; tricarboxylic acid cycle; succinate from succinyl-CoA (ligase route): step 1/1. Its function is as follows. Succinyl-CoA synthetase functions in the citric acid cycle (TCA), coupling the hydrolysis of succinyl-CoA to the synthesis of either ATP or GTP and thus represents the only step of substrate-level phosphorylation in the TCA. The beta subunit provides nucleotide specificity of the enzyme and binds the substrate succinate, while the binding sites for coenzyme A and phosphate are found in the alpha subunit. The protein is Succinate--CoA ligase [ADP-forming] subunit beta of Campylobacter jejuni subsp. doylei (strain ATCC BAA-1458 / RM4099 / 269.97).